A 586-amino-acid polypeptide reads, in one-letter code: Aspartate--tRNA(Asp/Asn) ligase (586 aa).

Position 172 (Glu-172) interacts with L-aspartate. An aspartate region spans residues 196–199 (QLYK). Arg-218 contributes to the L-aspartate binding site. Residues 218–220 (RDE) and Gln-227 contribute to the ATP site. His-446 serves as a coordination point for L-aspartate. Glu-480 contacts ATP. An L-aspartate-binding site is contributed by Arg-487. An ATP-binding site is contributed by 532–535 (GIDR).

This sequence belongs to the class-II aminoacyl-tRNA synthetase family. Type 1 subfamily. In terms of assembly, homodimer.

It localises to the cytoplasm. The catalysed reaction is tRNA(Asx) + L-aspartate + ATP = L-aspartyl-tRNA(Asx) + AMP + diphosphate. In terms of biological role, aspartyl-tRNA synthetase with relaxed tRNA specificity since it is able to aspartylate not only its cognate tRNA(Asp) but also tRNA(Asn). Reaction proceeds in two steps: L-aspartate is first activated by ATP to form Asp-AMP and then transferred to the acceptor end of tRNA(Asp/Asn). The polypeptide is Aspartate--tRNA(Asp/Asn) ligase (Borreliella burgdorferi (strain ATCC 35210 / DSM 4680 / CIP 102532 / B31) (Borrelia burgdorferi)).